A 108-amino-acid polypeptide reads, in one-letter code: uncharacterized protein (108 aa).

This is an uncharacterized protein from Rickettsia prowazekii (strain Madrid E).